A 638-amino-acid chain; its full sequence is 1-deoxy-D-xylulose-5-phosphate synthase (638 aa).

Thiamine diphosphate-binding positions include His74 and 115-117; that span reads GHS. Asp146 lines the Mg(2+) pocket. Residues 147–148, Asn175, Tyr286, and Glu366 contribute to the thiamine diphosphate site; that span reads GA. Asn175 serves as a coordination point for Mg(2+).

This sequence belongs to the transketolase family. DXPS subfamily. Homodimer. Requires Mg(2+) as cofactor. Thiamine diphosphate is required as a cofactor.

The enzyme catalyses D-glyceraldehyde 3-phosphate + pyruvate + H(+) = 1-deoxy-D-xylulose 5-phosphate + CO2. Its pathway is metabolic intermediate biosynthesis; 1-deoxy-D-xylulose 5-phosphate biosynthesis; 1-deoxy-D-xylulose 5-phosphate from D-glyceraldehyde 3-phosphate and pyruvate: step 1/1. In terms of biological role, catalyzes the acyloin condensation reaction between C atoms 2 and 3 of pyruvate and glyceraldehyde 3-phosphate to yield 1-deoxy-D-xylulose-5-phosphate (DXP). The sequence is that of 1-deoxy-D-xylulose-5-phosphate synthase from Syntrophomonas wolfei subsp. wolfei (strain DSM 2245B / Goettingen).